Here is a 139-residue protein sequence, read N- to C-terminus: MGLCLAKRNHDADDDEPHIELAGGNVHLITTKERWDQKLSEASRDGKIVLANFSARWCGPCKQIAPYYIELSENYPSLMFLVIDVDELSDFSASWEIKATPTFFFLRDGQQVDKLVGANKPELHKKITAILDSLPPSDK.

The region spanning 20 to 132 (ELAGGNVHLI…LHKKITAILD (113 aa)) is the Thioredoxin domain. Catalysis depends on nucleophile residues cysteine 58 and cysteine 61. Cysteine 58 and cysteine 61 are disulfide-bonded.

The protein localises to the cytoplasm. Participates in various redox reactions through the reversible oxidation of the active center dithiol to a disulfide. The H form is known to activate a number of cytosolic enzymes. The polypeptide is Thioredoxin H-type (Populus jackii (Balm of Gilead)).